Reading from the N-terminus, the 435-residue chain is tRNA(Ile)-lysidine synthase (435 aa).

23-28 (SGGMDS) is a binding site for ATP.

Belongs to the tRNA(Ile)-lysidine synthase family.

The protein localises to the cytoplasm. The enzyme catalyses cytidine(34) in tRNA(Ile2) + L-lysine + ATP = lysidine(34) in tRNA(Ile2) + AMP + diphosphate + H(+). Functionally, ligates lysine onto the cytidine present at position 34 of the AUA codon-specific tRNA(Ile) that contains the anticodon CAU, in an ATP-dependent manner. Cytidine is converted to lysidine, thus changing the amino acid specificity of the tRNA from methionine to isoleucine. The polypeptide is tRNA(Ile)-lysidine synthase (Xanthomonas campestris pv. campestris (strain 8004)).